Here is a 306-residue protein sequence, read N- to C-terminus: Large ribosomal subunit protein uL18 (306 aa).

Belongs to the universal ribosomal protein uL18 family. Component of the large ribosomal subunit (LSU).

The protein resides in the cytoplasm. Its subcellular location is the nucleus. Its function is as follows. Component of the ribosome, a large ribonucleoprotein complex responsible for the synthesis of proteins in the cell. The small ribosomal subunit (SSU) binds messenger RNAs (mRNAs) and translates the encoded message by selecting cognate aminoacyl-transfer RNA (tRNA) molecules. The large subunit (LSU) contains the ribosomal catalytic site termed the peptidyl transferase center (PTC), which catalyzes the formation of peptide bonds, thereby polymerizing the amino acids delivered by tRNAs into a polypeptide chain. The nascent polypeptides leave the ribosome through a tunnel in the LSU and interact with protein factors that function in enzymatic processing, targeting, and the membrane insertion of nascent chains at the exit of the ribosomal tunnel. In Theileria annulata, this protein is Large ribosomal subunit protein uL18 (RPL5).